The following is a 254-amino-acid chain: 4-hydroxy-tetrahydrodipicolinate reductase (254 aa).

Residues 8–13 (GCSGKM), D35, 86–88 (CST), and 110–113 (SANM) each bind NAD(+). H143 serves as the catalytic Proton donor/acceptor. H144 is a binding site for (S)-2,3,4,5-tetrahydrodipicolinate. Residue K147 is the Proton donor of the active site. 153–154 (GT) provides a ligand contact to (S)-2,3,4,5-tetrahydrodipicolinate.

Belongs to the DapB family.

Its subcellular location is the cytoplasm. The catalysed reaction is (S)-2,3,4,5-tetrahydrodipicolinate + NAD(+) + H2O = (2S,4S)-4-hydroxy-2,3,4,5-tetrahydrodipicolinate + NADH + H(+). It carries out the reaction (S)-2,3,4,5-tetrahydrodipicolinate + NADP(+) + H2O = (2S,4S)-4-hydroxy-2,3,4,5-tetrahydrodipicolinate + NADPH + H(+). Its pathway is amino-acid biosynthesis; L-lysine biosynthesis via DAP pathway; (S)-tetrahydrodipicolinate from L-aspartate: step 4/4. Catalyzes the conversion of 4-hydroxy-tetrahydrodipicolinate (HTPA) to tetrahydrodipicolinate. This Clostridium perfringens (strain ATCC 13124 / DSM 756 / JCM 1290 / NCIMB 6125 / NCTC 8237 / Type A) protein is 4-hydroxy-tetrahydrodipicolinate reductase.